We begin with the raw amino-acid sequence, 107 residues long: Cytochrome c-550 (107 aa).

Heme c-binding residues include Cys-11, Cys-14, His-15, and Met-80.

Post-translationally, binds 1 heme c group covalently per subunit.

This is Cytochrome c-550 from Ancylobacter novellus (Thiobacillus novellus).